A 129-amino-acid polypeptide reads, in one-letter code: Phosphoribosyl-AMP cyclohydrolase (129 aa).

Asp94 serves as a coordination point for Mg(2+). Cys95 lines the Zn(2+) pocket. 2 residues coordinate Mg(2+): Asp96 and Asp98. 2 residues coordinate Zn(2+): Cys111 and Cys118.

This sequence belongs to the PRA-CH family. Homodimer. The cofactor is Mg(2+). Requires Zn(2+) as cofactor.

The protein resides in the cytoplasm. The enzyme catalyses 1-(5-phospho-beta-D-ribosyl)-5'-AMP + H2O = 1-(5-phospho-beta-D-ribosyl)-5-[(5-phospho-beta-D-ribosylamino)methylideneamino]imidazole-4-carboxamide. It functions in the pathway amino-acid biosynthesis; L-histidine biosynthesis; L-histidine from 5-phospho-alpha-D-ribose 1-diphosphate: step 3/9. Functionally, catalyzes the hydrolysis of the adenine ring of phosphoribosyl-AMP. The chain is Phosphoribosyl-AMP cyclohydrolase from Corynebacterium efficiens (strain DSM 44549 / YS-314 / AJ 12310 / JCM 11189 / NBRC 100395).